A 231-amino-acid polypeptide reads, in one-letter code: Large ribosomal subunit protein uL1 (231 aa).

This sequence belongs to the universal ribosomal protein uL1 family. As to quaternary structure, part of the 50S ribosomal subunit.

Binds directly to 23S rRNA. The L1 stalk is quite mobile in the ribosome, and is involved in E site tRNA release. Functionally, protein L1 is also a translational repressor protein, it controls the translation of the L11 operon by binding to its mRNA. In Legionella pneumophila (strain Paris), this protein is Large ribosomal subunit protein uL1.